A 406-amino-acid chain; its full sequence is 2,3-bisphosphoglycerate-independent phosphoglycerate mutase (406 aa).

Belongs to the BPG-independent phosphoglycerate mutase family. A-PGAM subfamily.

The catalysed reaction is (2R)-2-phosphoglycerate = (2R)-3-phosphoglycerate. Its pathway is carbohydrate degradation; glycolysis; pyruvate from D-glyceraldehyde 3-phosphate: step 3/5. In terms of biological role, catalyzes the interconversion of 2-phosphoglycerate and 3-phosphoglycerate. The protein is 2,3-bisphosphoglycerate-independent phosphoglycerate mutase of Methanococcus vannielii (strain ATCC 35089 / DSM 1224 / JCM 13029 / OCM 148 / SB).